The chain runs to 196 residues: ATP-dependent Clp protease proteolytic subunit (196 aa).

S98 (nucleophile) is an active-site residue. The active site involves H123.

It belongs to the peptidase S14 family. In terms of assembly, fourteen ClpP subunits assemble into 2 heptameric rings which stack back to back to give a disk-like structure with a central cavity, resembling the structure of eukaryotic proteasomes.

It is found in the cytoplasm. The enzyme catalyses Hydrolysis of proteins to small peptides in the presence of ATP and magnesium. alpha-casein is the usual test substrate. In the absence of ATP, only oligopeptides shorter than five residues are hydrolyzed (such as succinyl-Leu-Tyr-|-NHMec, and Leu-Tyr-Leu-|-Tyr-Trp, in which cleavage of the -Tyr-|-Leu- and -Tyr-|-Trp bonds also occurs).. Cleaves peptides in various proteins in a process that requires ATP hydrolysis. Has a chymotrypsin-like activity. Plays a major role in the degradation of misfolded proteins. This chain is ATP-dependent Clp protease proteolytic subunit, found in Lactiplantibacillus plantarum (strain ATCC BAA-793 / NCIMB 8826 / WCFS1) (Lactobacillus plantarum).